Consider the following 1521-residue polypeptide: Protein dispatched homolog 1 (1521 aa).

A compositionally biased stretch (polar residues) spans 1 to 10; it reads MAVISGSDSV. Residues 1–55 form a disordered region; the sequence is MAVISGSDSVLLSNGSISTSTSNPSPLSPSDGDLPAQHLGPRETPRTKASPNGCL. Positions 11–35 are enriched in low complexity; sequence LLSNGSISTSTSNPSPLSPSDGDLP. Residues Asn14 and Asn58 are each glycosylated (N-linked (GlcNAc...) asparagine). A helical transmembrane segment spans residues 189–209; that stretch reads VVVLGMCTLLIVVCALVGVLV. Asn390 carries N-linked (GlcNAc...) asparagine glycosylation. Residues 485–657 form the SSD domain; that stretch reads GIEFGIKHSL…VTWLPAVIVL (173 aa). The next 3 membrane-spanning stretches (helical) occupy residues 499–519, 524–544, and 548–568; these read LLMD…IMCV, MFIT…SYFL, and VFNF…LVGI. The N-linked (GlcNAc...) asparagine glycan is linked to Asn581. Transmembrane regions (helical) follow at residues 603–623, 637–657, 717–737, 986–1006, 1008–1028, 1038–1058, 1081–1101, and 1109–1129; these read AALS…ANYV, GTAI…VIVL, YLWL…VCVN, MGLS…NIII, LYAI…LVLL, VTIS…GVAY, IAMA…STVL, and FMML…QCLC. Composition is skewed to polar residues over residues 1355-1364 and 1418-1428; these read QENLGRTSTH and TKSKVSGLPNQ. The segment at 1355 to 1440 is disordered; sequence QENLGRTSTH…KEEKQVEPSL (86 aa). Residue Asn1455 is glycosylated (N-linked (GlcNAc...) asparagine).

Belongs to the dispatched family. In terms of assembly, interacts with SHH; via the cholesterol anchor of the dually lipid-modified SHH (ShhNp).

Its subcellular location is the membrane. In terms of biological role, functions in hedgehog (Hh) signaling. Regulates the release and extracellular accumulation of cholesterol-modified hedgehog proteins and is hence required for effective production of the Hh signal. Synergizes with SCUBE2 to cause an increase in SHH secretion. This Mus musculus (Mouse) protein is Protein dispatched homolog 1 (Disp1).